The sequence spans 321 residues: GTP 3',8-cyclase (321 aa).

The Radical SAM core domain occupies 5–233 (SFNRVIDYIR…QGSSKIYTLE (229 aa)). Residue Arg14 participates in GTP binding. 2 residues coordinate [4Fe-4S] cluster: Cys21 and Cys25. Tyr27 contacts S-adenosyl-L-methionine. Cys28 is a binding site for [4Fe-4S] cluster. Arg64 contacts GTP. An S-adenosyl-L-methionine-binding site is contributed by Gly68. Ser95 provides a ligand contact to GTP. Ser119 lines the S-adenosyl-L-methionine pocket. GTP is bound at residue Lys155. Met189 contacts S-adenosyl-L-methionine. Cys249 and Cys252 together coordinate [4Fe-4S] cluster. 254–256 (RIR) serves as a coordination point for GTP. Cys266 provides a ligand contact to [4Fe-4S] cluster.

Belongs to the radical SAM superfamily. MoaA family. As to quaternary structure, monomer and homodimer. It depends on [4Fe-4S] cluster as a cofactor.

The enzyme catalyses GTP + AH2 + S-adenosyl-L-methionine = (8S)-3',8-cyclo-7,8-dihydroguanosine 5'-triphosphate + 5'-deoxyadenosine + L-methionine + A + H(+). The protein operates within cofactor biosynthesis; molybdopterin biosynthesis. In terms of biological role, catalyzes the cyclization of GTP to (8S)-3',8-cyclo-7,8-dihydroguanosine 5'-triphosphate. The polypeptide is GTP 3',8-cyclase (Helicobacter pylori (strain ATCC 700392 / 26695) (Campylobacter pylori)).